Consider the following 183-residue polypeptide: Gamma-crystallin N-B (183 aa).

Beta/gamma crystallin 'Greek key' domains follow at residues 6–46 (GKIC…RVES), 47–89 (GAWI…RPIR), 95–136 (YRME…RVFG), and 138–180 (GAWV…RRIV).

The protein belongs to the beta/gamma-crystallin family. As to quaternary structure, monomer.

Its function is as follows. Crystallins are the dominant structural components of the vertebrate eye lens. The chain is Gamma-crystallin N-B (crygnb) from Danio rerio (Zebrafish).